Consider the following 861-residue polypeptide: DNA mismatch repair protein MutS (861 aa).

618-625 (GPNMGGKS) is an ATP binding site.

The protein belongs to the DNA mismatch repair MutS family.

Functionally, this protein is involved in the repair of mismatches in DNA. It is possible that it carries out the mismatch recognition step. This protein has a weak ATPase activity. The polypeptide is DNA mismatch repair protein MutS (Shewanella sp. (strain MR-7)).